The primary structure comprises 519 residues: Putative glucosylceramidase 4 (519 aa).

The first 24 residues, M1–S24, serve as a signal peptide directing secretion. The active-site Proton donor is E256. Residue E361 is the Nucleophile of the active site.

It belongs to the glycosyl hydrolase 30 family.

The enzyme catalyses a beta-D-glucosylceramide + H2O = an N-acyl-sphingoid base + D-glucose. It catalyses the reaction a beta-D-glucosyl-(1&lt;-&gt;1')-N-acylsphing-4-enine + H2O = an N-acylsphing-4-enine + D-glucose. It carries out the reaction an N-acyl-1-beta-D-glucosyl-15-methylhexadecasphing-4-enine + H2O = an N-acyl-15-methylhexadecasphing-4-enine + D-glucose. The protein operates within lipid metabolism; sphingolipid metabolism. Glucosylceramidase that catalyzes the hydrolysis of glucosylceramides into free ceramides and glucose. C.elegans contains specific sphingoid bases, which are unique or different in structure compared to the sphingoid bases found in other animals. Two examples of these distinctive compounds are: 15-methylhexadecasphinganine and 15-methylhexadecasphing-4-enine. The sequence is that of Putative glucosylceramidase 4 (gba-4) from Caenorhabditis elegans.